Here is a 70-residue protein sequence, read N- to C-terminus: Testis-expressed protein 53 (70 aa).

As to expression, expressed in Testis.

This chain is Testis-expressed protein 53, found in Homo sapiens (Human).